Reading from the N-terminus, the 564-residue chain is MFS-type transporter dmxR4 (564 aa).

The disordered stretch occupies residues 1–61; that stretch reads MSSERPDGSA…PAKEAPAKPA (61 aa). The span at 25–44 shows a compositional bias: polar residues; that stretch reads TDSSRTSNDASQTSQDTAVQ. A compositionally biased stretch (basic and acidic residues) spans 47 to 57; that stretch reads PPKEAPAKEAP. Transmembrane regions (helical) follow at residues 71–91, 106–126, 138–158, 169–189, and 199–219; these read IALL…DRSI, AGDI…FQLL, TVFV…GAAP, LAGI…VFLI, and GLFG…GGGF. Residue Asn222 is glycosylated (N-linked (GlcNAc...) asparagine). 7 helical membrane passes run 227-247, 265-285, 299-319, 348-368, 376-396, 405-425, and 438-458; these read WCFY…ALWM, GLDL…LLAL, IIAL…LQAF, GVHL…GGFF, SPLA…IYTF, WIGS…APNL, and SALA…VSVG. Residue Asn469 is glycosylated (N-linked (GlcNAc...) asparagine). Transmembrane regions (helical) follow at residues 470–490 and 512–532; these read LSWI…VSFL and VFMI…SMEW. Residues 534–564 are disordered; that stretch reads SVKSRGSWDEKPAAKPTDKPTEEKKVPPEAV. Residues 539 to 564 are compositionally biased toward basic and acidic residues; sequence GSWDEKPAAKPTDKPTEEKKVPPEAV.

The protein belongs to the major facilitator superfamily. TCR/Tet family.

It is found in the membrane. MFS-type transporter; part of the gene cluster that mediates the biosynthesis of the dimeric xanthones cryptosporioptides. In Cryptosporiopsis sp. (strain 8999), this protein is MFS-type transporter dmxR4.